A 390-amino-acid chain; its full sequence is ATP-sensitive inward rectifier potassium channel 11 (390 aa).

Residues 1-65 (MLSRKGIIPE…LQDVFTTLVD (65 aa)) lie on the Cytoplasmic side of the membrane. 2 residues coordinate ATP: N48 and R50. Residues 66–92 (LKWTHTLLIFTMSFLCSWLLFAMVWWL) traverse the membrane as a helical segment. The Extracellular segment spans residues 93–116 (IAFAHGDLAPGEGAAVPCVTSIHS). C110 and C142 are disulfide-bonded. An intramembrane region (discontinuously helical; Pore-forming) is located at residues 117-133 (FSSAFLFSIEVQVTIGF). Residues T130 and F133 each coordinate K(+). The short motif at 130–135 (TIGFGG) is the Selectivity filter element. The Extracellular portion of the chain corresponds to 134–142 (GGRMVTEEC). Residues 143–171 (PLAILILIVQNIVGLMINAIMLGCIFMKT) form a helical membrane-spanning segment. At 172-390 (AQAHRRAETL…KFSISPDSLS (219 aa)) the chain is on the cytoplasmic side. R176 provides a ligand contact to a 1,2-diacyl-sn-glycero-3-phospho-(1D-myo-inositol-4,5-bisphosphate). Residue Y330 participates in ATP binding. At T341 the chain carries Phosphothreonine; by MAPK1. Phosphoserine; by MAPK1 is present on S385.

Belongs to the inward rectifier-type potassium channel (TC 1.A.2.1) family. KCNJ11 subfamily. Homotetramer; the homotetramer binds four ATP molecules (one ATP per subunit). Forms an heterooctamer with ABCC8/SUR1; one KCNJ11 homotetramer interacts with four ABCC8/SUR1 molecules. Interacts with ABCC9/SUR2. Post-translationally, phosphorylation by MAPK1 results in changes in channel gating that destabilize the closed states and reduce the ATP sensitivity.

It is found in the membrane. It catalyses the reaction K(+)(in) = K(+)(out). With respect to regulation, KATP channels are regulated by cytoplasmic ATP/ADP ratios; ATP inhibits the channel by closing the pore, while ADP activates the channel. Activated by phosphatidylinositol 4,5-biphosphate (PtdIns(4,5)P2). Inward rectifier potassium channel that forms the pore of ATP-sensitive potassium channels (KATP), regulating potassium permeability as a function of cytoplasmic ATP and ADP concentrations in many different cells. Inward rectifier potassium channels are characterized by a greater tendency to allow potassium to flow into the cell rather than out of it. Their voltage dependence is regulated by the concentration of extracellular potassium; as external potassium is raised, the voltage range of the channel opening shifts to more positive voltages. The inward rectification is mainly due to the blockage of outward current by internal magnesium. Can be blocked by extracellular barium. In pancreatic cells, it forms KATP channels with ABCC8/SUR1. Can form cardiac and smooth muscle-type KATP channels with ABCC9. The protein is ATP-sensitive inward rectifier potassium channel 11 (KCNJ11) of Oryctolagus cuniculus (Rabbit).